Reading from the N-terminus, the 310-residue chain is Phosphoribosylaminoimidazole-succinocarboxamide synthase (310 aa).

It belongs to the SAICAR synthetase family.

The enzyme catalyses 5-amino-1-(5-phospho-D-ribosyl)imidazole-4-carboxylate + L-aspartate + ATP = (2S)-2-[5-amino-1-(5-phospho-beta-D-ribosyl)imidazole-4-carboxamido]succinate + ADP + phosphate + 2 H(+). The protein operates within purine metabolism; IMP biosynthesis via de novo pathway; 5-amino-1-(5-phospho-D-ribosyl)imidazole-4-carboxamide from 5-amino-1-(5-phospho-D-ribosyl)imidazole-4-carboxylate: step 1/2. The protein is Phosphoribosylaminoimidazole-succinocarboxamide synthase of Xanthomonas oryzae pv. oryzae (strain MAFF 311018).